Here is a 737-residue protein sequence, read N- to C-terminus: Polyribonucleotide nucleotidyltransferase (737 aa).

Mg(2+)-binding residues include D489 and D495. The 60-residue stretch at 556–615 (PKIDTIKIDVDKIKIVIGKGGETIDKIIAETGVKIDIDEEGNVSIYSSDQDAINRAKEII) folds into the KH domain. In terms of domain architecture, S1 motif spans 625–693 (DEVYRAKVVR…EKGRIDASMK (69 aa)). The disordered stretch occupies residues 691 to 737 (SMKALLPRPPKPEHDEKGEKSERPHRPRHHKDHKPKKEFTETPKDSE). Residues 700 to 714 (PKPEHDEKGEKSERP) show a composition bias toward basic and acidic residues. The span at 715–724 (HRPRHHKDHK) shows a compositional bias: basic residues. A compositionally biased stretch (basic and acidic residues) spans 725–737 (PKKEFTETPKDSE).

This sequence belongs to the polyribonucleotide nucleotidyltransferase family. Mg(2+) is required as a cofactor.

Its subcellular location is the cytoplasm. It catalyses the reaction RNA(n+1) + phosphate = RNA(n) + a ribonucleoside 5'-diphosphate. Involved in mRNA degradation. Catalyzes the phosphorolysis of single-stranded polyribonucleotides processively in the 3'- to 5'-direction. This chain is Polyribonucleotide nucleotidyltransferase, found in Streptococcus pneumoniae serotype 19F (strain G54).